The chain runs to 212 residues: MNHRRSSIVLLILSILSPVTLSIRYELLSGHTKCISEEIHANAMTIGKYSIINPHEDHPLPSSHKVTVRVTSPQGTAYHESDGVESGQFSFVAVETGDYISCFSAVDHKPETTLIIDFDWRTGIHTKDWSNVAKKSQVETMEFEVKKLFETVNGIHDEMFYLRDREEEMHNLNIATNSKMAWLSFVSLAVCLSVAGLQFWHLKTFFQKKKLI.

An N-terminal signal peptide occupies residues 1 to 22 (MNHRRSSIVLLILSILSPVTLS). At 23-179 (IRYELLSGHT…HNLNIATNSK (157 aa)) the chain is on the lumenal side. Residues 32–147 (TKCISEEIHA…VETMEFEVKK (116 aa)) enclose the GOLD domain. Residues 162–175 (LRDREEEMHNLNIA) adopt a coiled-coil conformation. Arg165 carries the omega-N-methylated arginine modification. The helical transmembrane segment at 180 to 200 (MAWLSFVSLAVCLSVAGLQFW) threads the bilayer. Residues 201-212 (HLKTFFQKKKLI) are Cytoplasmic-facing. Residues 205-206 (FF) carry the COPII vesicle coat-binding motif. Residues 205 to 212 (FFQKKKLI) carry the COPI vesicle coat-binding motif.

It belongs to the EMP24/GP25L family. As to quaternary structure, probably oligomerizes with other members of the EMP24/GP25L family. Associates with the COPI vesicle coat (coatomer). Associates with the COPII vesicle coat (coatomer).

The protein localises to the endoplasmic reticulum membrane. It localises to the golgi apparatus. The protein resides in the cis-Golgi network membrane. Its subcellular location is the golgi stack membrane. Involved in vesicular protein trafficking. Mainly functions in the early secretory pathway. Thought to act as cargo receptor at the lumenal side for incorporation of secretory cargo molecules into transport vesicles and to be involved in vesicle coat formation at the cytoplasmic side. This is Transmembrane emp24 domain-containing protein p24delta7 from Arabidopsis thaliana (Mouse-ear cress).